A 489-amino-acid chain; its full sequence is Beta-glucosidase 14 (489 aa).

The N-terminal stretch at 1–21 (MTSKYFSVLVFIILASNEVVA) is a signal peptide. Residue Gln49 coordinates a beta-D-glucoside. Asn80 carries an N-linked (GlcNAc...) asparagine glycan. Residues His153 and 198–199 (NE) each bind a beta-D-glucoside. Glu199 functions as the Proton donor in the catalytic mechanism. Cys218 and Cys226 are joined by a disulfide. Residue Asn225 is glycosylated (N-linked (GlcNAc...) asparagine). Tyr343 contributes to the a beta-D-glucoside binding site. Asn357 carries an N-linked (GlcNAc...) asparagine glycan. A beta-D-glucoside contacts are provided by residues Glu396, Trp441, 448 to 449 (EW), and Phe457. Glu396 (nucleophile) is an active-site residue.

It belongs to the glycosyl hydrolase 1 family.

It catalyses the reaction Hydrolysis of terminal, non-reducing beta-D-glucosyl residues with release of beta-D-glucose.. The protein is Beta-glucosidase 14 of Arabidopsis thaliana (Mouse-ear cress).